We begin with the raw amino-acid sequence, 1047 residues long: Ribonucleoside-diphosphate reductase subunit alpha (1047 aa).

ATP-cone domains are found at residues 9–111, 118–219, and 237–327; these read CTIV…KAHR, LSVV…ARVR, and VEVL…EALG. Substrate-binding positions include threonine 442, 457-458, glycine 486, 670-674, and 857-861; these read SC, NLCTE, and PTATI. A disulfide bridge links cysteine 458 with cysteine 687. Residue asparagine 670 is the Proton acceptor of the active site. Cysteine 672 functions as the Cysteine radical intermediate in the catalytic mechanism. Glutamate 674 (proton acceptor) is an active-site residue.

It belongs to the ribonucleoside diphosphate reductase large chain family. In terms of assembly, tetramer of two alpha and two beta subunits.

The enzyme catalyses a 2'-deoxyribonucleoside 5'-diphosphate + [thioredoxin]-disulfide + H2O = a ribonucleoside 5'-diphosphate + [thioredoxin]-dithiol. Under complex allosteric control mediated by deoxynucleoside triphosphates and ATP binding. The type of nucleotide bound at the specificity site determines substrate preference. It seems probable that ATP makes the enzyme reduce CDP and UDP, dGTP favors ADP reduction and dTTP favors GDP reduction. Provides the precursors necessary for DNA synthesis. Catalyzes the biosynthesis of deoxyribonucleotides from the corresponding ribonucleotides. This chain is Ribonucleoside-diphosphate reductase subunit alpha (nrdA), found in Chlamydia trachomatis serovar D (strain ATCC VR-885 / DSM 19411 / UW-3/Cx).